The following is a 450-amino-acid chain: NADP-specific glutamate dehydrogenase (450 aa).

K111 is a catalytic residue.

It belongs to the Glu/Leu/Phe/Val dehydrogenases family. As to quaternary structure, homohexamer.

It catalyses the reaction L-glutamate + NADP(+) + H2O = 2-oxoglutarate + NH4(+) + NADPH + H(+). The sequence is that of NADP-specific glutamate dehydrogenase (GDHA) from Laccaria bicolor (strain S238N-H82 / ATCC MYA-4686) (Bicoloured deceiver).